Here is a 193-residue protein sequence, read N- to C-terminus: MRYLLAVLIAAAFVISSGTSVSTIADDELILSKDTTIGAAVAPTFHDDKRMLQTKAVNGLEEERGWPLLETGIGKIKMGGKKFKHATKRMFGMVSPAGEAKFEAYKGLHKLKRGLIRMYRRVKWWFQKNILRQKHALEEGATRAKHKVSEANQKLKHRTKESEKTAYHRLKEAFQKFRHRMKDFFKKMRVYAY.

A signal peptide spans 1–20 (MRYLLAVLIAAAFVISSGTS). Residues 50-64 (RMLQTKAVNGLEEER) carry the RxLR-dEER motif.

This sequence belongs to the RxLR effector family.

It is found in the secreted. It localises to the host membrane. Functionally, secreted effector that completely suppresses the host cell death induced by cell death-inducing proteins. This Plasmopara viticola (Downy mildew of grapevine) protein is Secreted RxLR effector protein 126.